Consider the following 194-residue polypeptide: HTH-type transcriptional regulator BetI (194 aa).

One can recognise an HTH tetR-type domain in the interval 8 to 68; that stretch reads EIRRAQLIDA…ATMRHVLRDL (61 aa). Positions 31–50 form a DNA-binding region, H-T-H motif; that stretch reads TLASVAQRANISTGIVSHYF.

It functions in the pathway amine and polyamine biosynthesis; betaine biosynthesis via choline pathway [regulation]. Its function is as follows. Repressor involved in the biosynthesis of the osmoprotectant glycine betaine. It represses transcription of the choline transporter BetT and the genes of BetAB involved in the synthesis of glycine betaine. The chain is HTH-type transcriptional regulator BetI from Burkholderia lata (strain ATCC 17760 / DSM 23089 / LMG 22485 / NCIMB 9086 / R18194 / 383).